Reading from the N-terminus, the 1020-residue chain is LLGL scribble cell polarity complex component 2 (1020 aa).

WD repeat units follow at residues 36-69, 76-117, 132-169, 193-227, 233-264, 282-324, 332-364, 386-462, 506-581, 590-651, 710-766, 775-827, 832-884, and 898-921; these read SALG…FMGL, VTQV…IGRF, VTAV…ENNI, TLHE…VQHF, LESV…GEDP, AISK…KTHE, IIDF…VVDL, TCSH…YKLS, QKIH…FALV, TAIA…LRQS, VRTL…KEIQ, GLVV…VSSK, LTAV…VHYP, and VFTK…SLST. Residues 935–968 are disordered; the sequence is LQMRSKSPSSPVHRDLPDGVPTEHRNFKGDSEGY. Positions 946 to 965 are enriched in basic and acidic residues; it reads VHRDLPDGVPTEHRNFKGDS.

It belongs to the WD repeat L(2)GL family. Phosphorylated.

It is found in the cytoplasm. The protein resides in the cytoskeleton. Essential for hemidesmosome formation and maintenance of the cytoskeleton elements as well as cellular morphology in the basal epidermis during development. Also involved in regulating growth of the basal epidermis. This is LLGL scribble cell polarity complex component 2 (llgl2) from Danio rerio (Zebrafish).